The following is a 658-amino-acid chain: Threonine--tRNA ligase (658 aa).

One can recognise a TGS domain in the interval 1–61 (MSDVRVIIQR…RDGESVEPVE (61 aa)). The catalytic stretch occupies residues 259–554 (DHRKLGNELD…LLEHYAGAFP (296 aa)). Residues C353, H404, and H531 each contribute to the Zn(2+) site.

The protein belongs to the class-II aminoacyl-tRNA synthetase family. Homodimer. Zn(2+) is required as a cofactor.

It localises to the cytoplasm. It carries out the reaction tRNA(Thr) + L-threonine + ATP = L-threonyl-tRNA(Thr) + AMP + diphosphate + H(+). Functionally, catalyzes the attachment of threonine to tRNA(Thr) in a two-step reaction: L-threonine is first activated by ATP to form Thr-AMP and then transferred to the acceptor end of tRNA(Thr). Also edits incorrectly charged L-seryl-tRNA(Thr). The chain is Threonine--tRNA ligase from Streptomyces griseus subsp. griseus (strain JCM 4626 / CBS 651.72 / NBRC 13350 / KCC S-0626 / ISP 5235).